Reading from the N-terminus, the 957-residue chain is Calsyntenin-3 (957 aa).

The N-terminal stretch at 1 to 19 (MTLLLVSLLLASLLQISSG) is a signal peptide. At 1 to 21 (MTLLLVSLLLASLLQISSGNK) the chain is on the cytoplasmic side. Residues 20–848 (NKANKHKPWI…SHRNSMVPSA (829 aa)) lie on the Extracellular side of the membrane. The helical intramembrane region spans 22–42 (ANKHKPWIEAEYQGIVMENDN). 2 consecutive Cadherin domains span residues 29 to 145 (IEAE…APVF) and 146 to 246 (VERL…KPSW). The Cytoplasmic portion of the chain corresponds to 43–73 (TVLLNPPLFALDKDAPLRYAGEICGFRLHGS). The segment at residues 74–94 (GVPFKAVILDKATGEGLIRAK) is an intramembrane region (helical). Topologically, residues 95–139 (EPVDCEAQKEHTFTTQAYDCVDGPDGANTKKSHKATVHVRVNDVN) are cytoplasmic. Positions 140–160 (EFAPVFVERLYRAAVTEGKLY) form an intramembrane region, helical. The Cytoplasmic segment spans residues 161–248 (DRILRVEAID…KPTCKPSWQG (88 aa)). The helical transmembrane segment at 249–269 (WNKRIEYAPGAGSLALFPGIR) threads the bilayer. The Lumenal segment spans residues 270 to 357 (LETCDEPLWN…GTQAVQVPLG (88 aa)). N-linked (GlcNAc...) asparagine glycans are attached at residues Asn-299, Asn-327, Asn-347, Asn-508, and Asn-741. The helical transmembrane segment at 849 to 869 (ATLIIVVCVGFLVLMVILGLV) threads the bilayer. Over 870 to 957 (RIHSLHRRVS…RIIESPPHRY (88 aa)) the chain is Cytoplasmic. Residues 916–957 (QQTGVAGVAGGQQEEEDSSDSEAADSPSSDERRIIESPPHRY) form a disordered region. The span at 928–938 (QEEEDSSDSEA) shows a compositional bias: acidic residues. Over residues 944–957 (SDERRIIESPPHRY) the composition is skewed to basic and acidic residues.

This sequence belongs to the calsyntenin family. In terms of assembly, interacts (via cadherin domains) with both alpha and beta isoforms of neurexins (NRXN1, NRXN2 and NRXN3). Directly interacts with APBA2. Forms a tripartite complex with APBA2 and APP. Interacts with low affinity with KLC1. Interacts with SLC23A2/SVCT2. Interacts with CIDEA; inhibiting the lipid transferase activity of CIDEA. Interacts with CIDEC; inhibiting the lipid transferase activity of CIDEC. Proteolytically processed under normal cellular conditions. A primary zeta-cleavage generates a large extracellular (soluble) N-terminal domain (sAlc) and a short C-terminal transmembrane fragment (CTF1). A secondary cleavage catalyzed by gamma-secretase within the transmembrane domain releases the beta-Alc-beta chain in the extracellular milieu and produces an intracellular fragment (AlcICD). This processing is strongly suppressed in the tripartite complex formed with APBA2 and APP, which seems to prevent the association with gamma-secretase. Post-translationally, ubiquitinated: endoplasmic reticulum-localized protein is ubiquitinated and degraded by the endoplasmic reticulum-associated degradation (ERAD) pathway.

It localises to the postsynaptic cell membrane. It is found in the endoplasmic reticulum membrane. The protein resides in the golgi apparatus membrane. The protein localises to the cell projection. Its subcellular location is the dendrite. It localises to the lipid droplet. In terms of biological role, postsynaptic adhesion molecule that binds to presynaptic neurexins to mediate both excitatory and inhibitory synapse formation. Promotes synapse development by acting as a cell adhesion molecule at the postsynaptic membrane, which associates with both neurexin-alpha and neurexin-beta proteins at the presynaptic membrane. Regulates the balance between excitatory and inhibitory synapses by inhibiting formation of excitatory parallel-fiber synapses and promoting formation of inhibitory synapses in the same neuron. May also be involved in ascorbate (vitamin C) uptake via its interaction with SLC23A2/SVCT2. Complex formation with APBA2 and APP, stabilizes APP metabolism and enhances APBA2-mediated suppression of beta-APP40 secretion, due to the retardation of intracellular APP maturation. Adipose-specific isoform that plays a key role in adaptive thermogenesis. Facilitates the efficient use of stored triglyceride by promoting multilocular morphology of thermogenic adipocytes: acts by inhibiting the activity of CIDEA and CIDEC on lipid droplets, thereby preventing lipid droplet fusion and facilitating lipid utilization. May also participate in adaptive thermogenesis by promoting sympathetic innervation of thermogenic adipose tissue: acts by driving secretion of neurotrophic factor S100B from brown adipocytes, stimulating neurite outgrowth from sympathetic neurons. This chain is Calsyntenin-3, found in Rattus norvegicus (Rat).